The following is a 274-amino-acid chain: Thiazole synthase (274 aa).

Residue K115 is the Schiff-base intermediate with DXP of the active site. Residues G176, 202 to 203 (AG), and 224 to 225 (NS) each bind 1-deoxy-D-xylulose 5-phosphate.

The protein belongs to the ThiG family. As to quaternary structure, homotetramer. Forms heterodimers with either ThiH or ThiS.

The protein localises to the cytoplasm. The enzyme catalyses [ThiS sulfur-carrier protein]-C-terminal-Gly-aminoethanethioate + 2-iminoacetate + 1-deoxy-D-xylulose 5-phosphate = [ThiS sulfur-carrier protein]-C-terminal Gly-Gly + 2-[(2R,5Z)-2-carboxy-4-methylthiazol-5(2H)-ylidene]ethyl phosphate + 2 H2O + H(+). It participates in cofactor biosynthesis; thiamine diphosphate biosynthesis. Catalyzes the rearrangement of 1-deoxy-D-xylulose 5-phosphate (DXP) to produce the thiazole phosphate moiety of thiamine. Sulfur is provided by the thiocarboxylate moiety of the carrier protein ThiS. In vitro, sulfur can be provided by H(2)S. The polypeptide is Thiazole synthase (Psychrobacter arcticus (strain DSM 17307 / VKM B-2377 / 273-4)).